Consider the following 169-residue polypeptide: MLPSTMFLVHLPLSTNRLHCLRNTSLESYLCSFVHLNHPLHISDRVILISLHEAVRFSFAFSFPRGTLSIAYCLMSSVSTSSEAIMSTELLANYCHSSLHVCICISSFPNETGNHDSFPGAVVSISDQPTDQCKLAAKELPLRNLLECRFFDCMGEEDLINLGVIGTER.

The protein belongs to the FAM106 family.

The sequence is that of Protein FAM106A (FAM106A) from Homo sapiens (Human).